A 502-amino-acid chain; its full sequence is ATP synthase subunit alpha (502 aa).

169 to 176 (GDRQTGKT) contacts ATP.

Belongs to the ATPase alpha/beta chains family. F-type ATPases have 2 components, CF(1) - the catalytic core - and CF(0) - the membrane proton channel. CF(1) has five subunits: alpha(3), beta(3), gamma(1), delta(1), epsilon(1). CF(0) has three main subunits: a(1), b(2) and c(9-12). The alpha and beta chains form an alternating ring which encloses part of the gamma chain. CF(1) is attached to CF(0) by a central stalk formed by the gamma and epsilon chains, while a peripheral stalk is formed by the delta and b chains.

The protein resides in the cell inner membrane. The catalysed reaction is ATP + H2O + 4 H(+)(in) = ADP + phosphate + 5 H(+)(out). Produces ATP from ADP in the presence of a proton gradient across the membrane. The alpha chain is a regulatory subunit. This Geotalea uraniireducens (strain Rf4) (Geobacter uraniireducens) protein is ATP synthase subunit alpha.